The sequence spans 355 residues: Fe-S cluster assembly protein DRE2 (355 aa).

An N-terminal SAM-like domain region spans residues 23–156; that stretch reads TSFNPRTLLL…KPDYSASVAV (134 aa). The segment at 157-247 is linker; it reads PLRLRRKDNS…EDTLLTEEDM (91 aa). The segment at 189–214 is disordered; that stretch reads RKSVDMTDDVPEKDVPKVDSPKNDAP. Positions 190–213 are enriched in basic and acidic residues; sequence KSVDMTDDVPEKDVPKVDSPKNDA. 4 residues coordinate [2Fe-2S] cluster: cysteine 257, cysteine 268, cysteine 271, and cysteine 273. Residues 257–273 form a fe-S binding site A region; sequence CAPRAGKRRRACKDCTC. Cysteine 318, cysteine 321, cysteine 329, and cysteine 332 together coordinate [4Fe-4S] cluster. 2 consecutive short sequence motifs (cx2C motif) follow at residues 318–321 and 329–332; these read CGNC and CDGC. Residues 318–332 are fe-S binding site B; the sequence is CGNCSLGDAFRCDGC.

Belongs to the anamorsin family. In terms of assembly, monomer. Interacts with TAH18. Interacts with MIA40. [2Fe-2S] cluster serves as cofactor. The cofactor is [4Fe-4S] cluster.

Its subcellular location is the cytoplasm. It is found in the mitochondrion intermembrane space. In terms of biological role, component of the cytosolic iron-sulfur (Fe-S) protein assembly (CIA) machinery required for the maturation of extramitochondrial Fe-S proteins. Part of an electron transfer chain functioning in an early step of cytosolic Fe-S biogenesis, facilitating the de novo assembly of a [4Fe-4S] cluster on the scaffold complex CFD1-NBP35. Electrons are transferred to DRE2 from NADPH via the FAD- and FMN-containing protein TAH18. TAH18-DRE2 are also required for the assembly of the diferric tyrosyl radical cofactor of ribonucleotide reductase (RNR), probably by providing electrons for reduction during radical cofactor maturation in the catalytic small subunit RNR2. This chain is Fe-S cluster assembly protein DRE2, found in Botryotinia fuckeliana (strain B05.10) (Noble rot fungus).